A 515-amino-acid polypeptide reads, in one-letter code: Iridoid oxidase (515 aa).

2 helical membrane passes run 8–28 and 180–200; these read SLNP…IIFV and AVQL…NLML. Cysteine 455 is a binding site for heme.

This sequence belongs to the cytochrome P450 family. In terms of tissue distribution, expressed in the leaf internal phloem-associated parenchyma (IPAP) inside the mesophyll.

The protein localises to the endoplasmic reticulum membrane. The enzyme catalyses (+)-cis-trans-nepetalactol + 3 reduced [NADPH--hemoprotein reductase] + 3 O2 = 7-deoxyloganetate + 3 oxidized [NADPH--hemoprotein reductase] + 4 H2O + 4 H(+). Its pathway is alkaloid biosynthesis. Component of the seco-iridoid and derivatives monoterpenoid indole alkaloids (MIAs, e.g. vincristine, quinine, and strychnine) biosynthesis pathway. Catalyzes the conversion of cis-trans-nepetalactol (iridodial) into 7-deoxyloganetic acid. Also converts iridotrial into 7-deoxyloganetic acid. The protein is Iridoid oxidase of Catharanthus roseus (Madagascar periwinkle).